Here is a 116-residue protein sequence, read N- to C-terminus: MSDTPLKCTTRHVRIFTATVEDNGELKASSDKLTLDLDPDNEFEWDQPVLAKVQQRFAELVDAAAGTELSDYNLRRIGTDLEGFIRQLLQAGELRYNLGARVLNYSMGLPRTPETL.

The protein belongs to the complex I NdhM subunit family. As to quaternary structure, NDH-1 can be composed of about 15 different subunits; different subcomplexes with different compositions have been identified which probably have different functions.

The protein localises to the cellular thylakoid membrane. The catalysed reaction is a plastoquinone + NADH + (n+1) H(+)(in) = a plastoquinol + NAD(+) + n H(+)(out). It catalyses the reaction a plastoquinone + NADPH + (n+1) H(+)(in) = a plastoquinol + NADP(+) + n H(+)(out). Its function is as follows. NDH-1 shuttles electrons from an unknown electron donor, via FMN and iron-sulfur (Fe-S) centers, to quinones in the respiratory and/or the photosynthetic chain. The immediate electron acceptor for the enzyme in this species is believed to be plastoquinone. Couples the redox reaction to proton translocation, and thus conserves the redox energy in a proton gradient. Cyanobacterial NDH-1 also plays a role in inorganic carbon-concentration. This chain is NAD(P)H-quinone oxidoreductase subunit M, found in Synechococcus sp. (strain RCC307).